A 461-amino-acid polypeptide reads, in one-letter code: Photosystem II CP43 reaction center protein (461 aa).

The propeptide occupies 1–2 (ME). Threonine 3 carries the post-translational modification N-acetylthreonine. Threonine 3 carries the post-translational modification Phosphothreonine. Helical transmembrane passes span 57–81 (LFEV…PHLA), 122–143 (LLGP…KDRN), 166–188 (KALY…RKIT), 243–263 (KPFA…LSYS), and 279–300 (WFNN…ASQA). Glutamate 355 lines the [CaMn4O5] cluster pocket. A helical membrane pass occupies residues 435 to 459 (RARAAAAGFEKGIDRDFEPVLSMTP).

Belongs to the PsbB/PsbC family. PsbC subfamily. As to quaternary structure, PSII is composed of 1 copy each of membrane proteins PsbA, PsbB, PsbC, PsbD, PsbE, PsbF, PsbH, PsbI, PsbJ, PsbK, PsbL, PsbM, PsbT, PsbX, PsbY, PsbZ, Psb30/Ycf12, at least 3 peripheral proteins of the oxygen-evolving complex and a large number of cofactors. It forms dimeric complexes. It depends on Binds multiple chlorophylls and provides some of the ligands for the Ca-4Mn-5O cluster of the oxygen-evolving complex. It may also provide a ligand for a Cl- that is required for oxygen evolution. PSII binds additional chlorophylls, carotenoids and specific lipids. as a cofactor.

The protein resides in the plastid. It is found in the chloroplast thylakoid membrane. In terms of biological role, one of the components of the core complex of photosystem II (PSII). It binds chlorophyll and helps catalyze the primary light-induced photochemical processes of PSII. PSII is a light-driven water:plastoquinone oxidoreductase, using light energy to abstract electrons from H(2)O, generating O(2) and a proton gradient subsequently used for ATP formation. The protein is Photosystem II CP43 reaction center protein of Nicotiana sylvestris (Wood tobacco).